The primary structure comprises 261 residues: tRNA pseudouridine synthase A (261 aa).

The active-site Nucleophile is D51. Y109 contributes to the substrate binding site.

Belongs to the tRNA pseudouridine synthase TruA family. Homodimer.

The catalysed reaction is uridine(38/39/40) in tRNA = pseudouridine(38/39/40) in tRNA. In terms of biological role, formation of pseudouridine at positions 38, 39 and 40 in the anticodon stem and loop of transfer RNAs. This Shewanella sp. (strain W3-18-1) protein is tRNA pseudouridine synthase A.